Here is a 245-residue protein sequence, read N- to C-terminus: Uridylate kinase (245 aa).

12 to 15 lines the ATP pocket; the sequence is KLSG. Residues 20–25 form an involved in allosteric activation by GTP region; sequence GEKGVG. Gly-54 provides a ligand contact to UMP. ATP-binding residues include Gly-55 and Arg-59. UMP contacts are provided by residues Asp-74 and 135 to 142; that span reads VGSPYFST. Asn-163, Tyr-169, and Asp-172 together coordinate ATP.

The protein belongs to the UMP kinase family. As to quaternary structure, homohexamer.

It localises to the cytoplasm. The enzyme catalyses UMP + ATP = UDP + ADP. It participates in pyrimidine metabolism; CTP biosynthesis via de novo pathway; UDP from UMP (UMPK route): step 1/1. Allosterically activated by GTP. Inhibited by UTP. In terms of biological role, catalyzes the reversible phosphorylation of UMP to UDP. The chain is Uridylate kinase from Streptococcus mutans serotype c (strain ATCC 700610 / UA159).